Here is a 118-residue protein sequence, read N- to C-terminus: MPRVKRGVTARARHKKVLKLAKGYYGARSRTYRVAVQAVTKAGQYAYRDRRQKKRQFRQLWIARINAAARQNGLSYSRFINGLKKASIEIDRKILADIAVFDKVVFATLVEKAKEALN.

The protein belongs to the bacterial ribosomal protein bL20 family.

Its function is as follows. Binds directly to 23S ribosomal RNA and is necessary for the in vitro assembly process of the 50S ribosomal subunit. It is not involved in the protein synthesizing functions of that subunit. The chain is Large ribosomal subunit protein bL20 from Shewanella baltica (strain OS223).